The chain runs to 210 residues: Heart- and neural crest derivatives-expressed protein 2 (210 aa).

The segment at 81-101 (SGAGGLMQRPVKRRGTANRKE) is disordered. Basic residues predominate over residues 90–101 (PVKRRGTANRKE). In terms of domain architecture, bHLH spans 92–144 (KRRGTANRKERRRTISINSAFAELRECIPNVPADTKLSKIKTLRLATSYIAYL).

Efficient DNA binding requires dimerization with another bHLH protein. As to expression, heart, liver and spleen.

The protein localises to the nucleus. Essential for cardiac morphogenesis and for the development of branchial arches. Binds DNA on E-box consensus sequence 5'-CANNTG-3'. The polypeptide is Heart- and neural crest derivatives-expressed protein 2 (hand2) (Xenopus laevis (African clawed frog)).